Here is a 480-residue protein sequence, read N- to C-terminus: Coronin-2B (480 aa).

WD repeat units follow at residues 85 to 125 (GHQG…LKRN), 135 to 177 (GHSR…KMID), 179 to 217 (HRDV…VLQE), 220 to 263 (CKTH…MPVT), and 265 to 308 (EEID…PYLT). Residues 436-475 (NELLRMFFRQQEEIRRLKEQLSQRDLLVRQLELELKNLRN) adopt a coiled-coil conformation.

It belongs to the WD repeat coronin family.

It localises to the cytoplasm. It is found in the cytoskeleton. Functionally, may play a role in the reorganization of neuronal actin structure. This is Coronin-2B (coro2b) from Xenopus tropicalis (Western clawed frog).